The chain runs to 76 residues: MTDVETTYADFIASGRTGRRNAIHDILVSSASGNSNELALKLAGLDINKTEGEEDAQRSSTEQSGEAQGEAAKSES.

Threonine 2 bears the N-acetylthreonine mark. The segment at 49 to 76 is disordered; it reads KTEGEEDAQRSSTEQSGEAQGEAAKSES.

Belongs to the PKI family.

Extremely potent competitive inhibitor of cAMP-dependent protein kinase activity, this protein interacts with the catalytic subunit of the enzyme after the cAMP-induced dissociation of its regulatory chains. The polypeptide is cAMP-dependent protein kinase inhibitor alpha (PKIA) (Homo sapiens (Human)).